The sequence spans 199 residues: Small ribosomal subunit protein uS5 (199 aa).

Residues 1–28 (MARTPNTDRRQRGGDDQRNRSPRSDERD) are disordered. The 64-residue stretch at 31 to 94 (FLDKLVHINR…DQAKRTMIKV (64 aa)) folds into the S5 DRBM domain.

Belongs to the universal ribosomal protein uS5 family. In terms of assembly, part of the 30S ribosomal subunit. Contacts proteins S4 and S8.

In terms of biological role, with S4 and S12 plays an important role in translational accuracy. Its function is as follows. Located at the back of the 30S subunit body where it stabilizes the conformation of the head with respect to the body. In Rhodospirillum rubrum (strain ATCC 11170 / ATH 1.1.1 / DSM 467 / LMG 4362 / NCIMB 8255 / S1), this protein is Small ribosomal subunit protein uS5.